The primary structure comprises 280 residues: Aspartate/glutamate leucyltransferase (280 aa).

The protein belongs to the R-transferase family. Bpt subfamily.

The protein localises to the cytoplasm. It catalyses the reaction N-terminal L-glutamyl-[protein] + L-leucyl-tRNA(Leu) = N-terminal L-leucyl-L-glutamyl-[protein] + tRNA(Leu) + H(+). The enzyme catalyses N-terminal L-aspartyl-[protein] + L-leucyl-tRNA(Leu) = N-terminal L-leucyl-L-aspartyl-[protein] + tRNA(Leu) + H(+). Functionally, functions in the N-end rule pathway of protein degradation where it conjugates Leu from its aminoacyl-tRNA to the N-termini of proteins containing an N-terminal aspartate or glutamate. This chain is Aspartate/glutamate leucyltransferase, found in Cereibacter sphaeroides (strain ATCC 17023 / DSM 158 / JCM 6121 / CCUG 31486 / LMG 2827 / NBRC 12203 / NCIMB 8253 / ATH 2.4.1.) (Rhodobacter sphaeroides).